We begin with the raw amino-acid sequence, 81 residues long: Large ribosomal subunit protein bL31B (81 aa).

The protein belongs to the bacterial ribosomal protein bL31 family. Type B subfamily. In terms of assembly, part of the 50S ribosomal subunit.

The chain is Large ribosomal subunit protein bL31B from Borreliella afzelii (strain PKo) (Borrelia afzelii).